We begin with the raw amino-acid sequence, 152 residues long: Proteolipid protein 2 (152 aa).

The MARVEL domain maps to 19-137 (FSRTRKGFLL…DAYITFPLRQ (119 aa)). 3 helical membrane-spanning segments follow: residues 25 to 45 (GFLL…FSTS), 48 to 68 (GYSF…VVYM), and 85 to 105 (FFRT…VLVE). Asparagine 108 carries N-linked (GlcNAc...) asparagine glycosylation. A helical transmembrane segment spans residues 112-132 (IAAGALGLCAAGLFGYDAYIT).

The protein resides in the membrane. Functionally, may play a role in cell differentiation in the intestinal epithelium. This is Proteolipid protein 2 (PLP2) from Bos taurus (Bovine).